The chain runs to 173 residues: PRKR-interacting protein 1 homolog (173 aa).

Disordered regions lie at residues 1 to 59 and 117 to 173; these read MAKE…PRSA and MLEE…LEDQ. The span at 26-42 shows a compositional bias: basic and acidic residues; sequence ATDEQRLKLERLMRNPD. Residues 50–142 are required for RNA-binding; the sequence is RPKEWSPRSA…LKEKKKMCKK (93 aa). Positions 99 to 150 form a coiled coil; it reads SEKQRLDEEYKKKLIQNKMLEEERTAKRRLKRQKLKEKKKMCKKGKKEEKKE. Residues 124–143 are compositionally biased toward basic residues; the sequence is AKRRLKRQKLKEKKKMCKKG. Residues 125–137 form a required for nuclear localization region; that stretch reads KRRLKRQKLKEKK. The span at 144 to 173 shows a compositional bias: basic and acidic residues; sequence KKEEKKEDKDGHTDPENSAESSDKSDLEDQ.

This sequence belongs to the PRKRIP1 family. In terms of assembly, component of the pre-catalytic and post-catalytic spliceosome complexes.

The protein localises to the nucleus. Its subcellular location is the nucleolus. Functionally, required for pre-mRNA splicing as component of the spliceosome. Binds double-stranded RNA. The chain is PRKR-interacting protein 1 homolog (prkrip1) from Xenopus laevis (African clawed frog).